The primary structure comprises 516 residues: Cytochrome P450 monooxygenase ntnM (516 aa).

The helical transmembrane segment at 22–42 threads the bilayer; that stretch reads IINVILSIAAIALIRALAISI. Residue cysteine 453 coordinates heme.

It belongs to the cytochrome P450 family. It depends on heme as a cofactor.

It is found in the membrane. It functions in the pathway secondary metabolite biosynthesis; terpenoid biosynthesis. Functionally, cytochrome P450 monooxygenase; part of the gene cluster that mediates the biosynthesis of the meroterpenoids nectripenoids A and B, as well as cochliquninone D and isocochliquninone E. The pathway probably begins with the HR-PKS ntnH that catalyzes two chain-extension steps to form a reduced triketide, which then primes the SAT domain in the NR-PKS ntnG to initiate three more cycles of extension to give a linear hexaketide corresponding to the polyketide part of nectripenoids. The FAD-dependent monooxygenase ntnJ then performs an oxidative decarboxylation at C11 of the ntnH/ntnG product, via an electrophilic aromatic hydroxylation with concomitant ipso-decarboxylation. The membrane-bound polyprenyl transferase ntnF then introduces a farnesyl group before the FAD-dependent monooxygenase ntnK functions as the first epoxidase on terminal C12'-C13' olefin, followed by a second epoxidation on C7'-C8' catalyzed by ntnA. The terpene cyclase/mutase ntnI then initiates the sequential tricyclic ring formation through protonation of the terminal epoxide and catalyzes the regioselective and stereoselective 6/6/6-tricyclic ring formation. The cytochrome P450 monooxygenase ntnM may then hydroxylate C1'. The sequence is that of Cytochrome P450 monooxygenase ntnM from Nectria sp.